Consider the following 291-residue polypeptide: Taste receptor type 2 member 16 (291 aa).

Position 1 (M1) is a topological domain, extracellular. Residues 2 to 22 traverse the membrane as a helical segment; sequence IPIQLTVFFMIIYVLESLTII. Over 23 to 41 the chain is Cytoplasmic; that stretch reads VQSSLIVAVLGREWLQVRR. The chain crosses the membrane as a helical span at residues 42–62; that stretch reads LMPVDMILISLGISRFCLQWA. Over 63 to 84 the chain is Extracellular; it reads SMLNNFCSYFNLNYVLCNLTIT. N-linked (GlcNAc...) asparagine glycosylation is present at N80. Residues 85 to 105 traverse the membrane as a helical segment; it reads WEFFNILTFWLNSLLTVFYCI. Topologically, residues 106–125 are cytoplasmic; the sequence is KVSSFTHHIFLWLRWRILRL. A helical transmembrane segment spans residues 126–146; the sequence is FPWILLGSLMITCVTIIPSAI. The Extracellular segment spans residues 147-182; sequence GNYIQIQLLTMEHLPRNSTVTDKLENFHQYQFQAHT. N163 carries N-linked (GlcNAc...) asparagine glycosylation. Residues 183–203 form a helical membrane-spanning segment; the sequence is VALVIPFILFLASTIFLMASL. The Cytoplasmic segment spans residues 204–228; the sequence is TKQIQHHSTGHCNPSMKARFTALRS. Residues 229–249 traverse the membrane as a helical segment; sequence LAVLFIVFTSYFLTILITIIG. Residues 250–257 lie on the Extracellular side of the membrane; the sequence is TLFDKRCW. The helical transmembrane segment at 258-278 threads the bilayer; it reads LWVWEAFVYAFILMHSTSLML. Topologically, residues 279 to 291 are cytoplasmic; the sequence is SSPTLKRILKGKC.

It belongs to the G-protein coupled receptor T2R family. As to quaternary structure, interacts with RTP3 and RTP4. Expressed in a subset of gustducin-positive taste receptor cells of the tongue. Expressed in circumvallate papillae and testis.

The protein localises to the cell membrane. Its function is as follows. Gustducin-coupled receptor implicated in the perception of bitter compounds in the oral cavity and the gastrointestinal tract. Signals through PLCB2 and the calcium-regulated cation channel TRPM5. This Homo sapiens (Human) protein is Taste receptor type 2 member 16 (TAS2R16).